Consider the following 450-residue polypeptide: MGAPPGYRPSAWVHLLHQLPRADFQLRPVPSGFAPRDQEYQQALLLVAALAGLGLGLSLIFIAVYLIRFCCCRPPEPPGAKSPPPGGGCVTWSCIAALLVGCAGIGIGFYGNSETSDGVSQLSSALQHANHTLSTIDDLVLETVERLGEAVRTELTTLEEVLSERVELVAATRGARRQAEAAAQHLQGLAFWQGVSLSPVQVAEDVTFVEEYRWLAYVLLLLLVLLVCLFTLLGLAKQSKWLVVVMTAMSLLVLVLSWGSMGLEAATAVGLSDFCSNPDTYVLNLTQEETGISSDILNYYFLCNQAVSNPFQQRLTLSQRALASIHSQLQGLEREASPQFPAAQKPLLSLEETLNVTERSFHQLVALLHCRSLHKDYGSALRGLCEDALEGLLFLMLFSLLSAGALATTLCSLPRAWALFPPSDDYDDTDDDDPFNPQESKRFVQWQSSI.

The Extracellular segment spans residues 1–43 (MGAPPGYRPSAWVHLLHQLPRADFQLRPVPSGFAPRDQEYQQA). The helical transmembrane segment at 44 to 64 (LLLVAALAGLGLGLSLIFIAV) threads the bilayer. The Cytoplasmic segment spans residues 65–88 (YLIRFCCCRPPEPPGAKSPPPGGG). The helical transmembrane segment at 89–109 (CVTWSCIAALLVGCAGIGIGF) threads the bilayer. Over 110–214 (YGNSETSDGV…DVTFVEEYRW (105 aa)) the chain is Extracellular. An N-linked (GlcNAc...) asparagine glycan is attached at asparagine 130. Residues 215 to 235 (LAYVLLLLLVLLVCLFTLLGL) form a helical membrane-spanning segment. Residues 236–240 (AKQSK) lie on the Cytoplasmic side of the membrane. The helical transmembrane segment at 241–261 (WLVVVMTAMSLLVLVLSWGSM) threads the bilayer. Topologically, residues 262–390 (GLEAATAVGL…LRGLCEDALE (129 aa)) are extracellular. Cystine bridges form between cysteine 275/cysteine 385 and cysteine 303/cysteine 370. Residues asparagine 284 and asparagine 355 are each glycosylated (N-linked (GlcNAc...) asparagine). The chain crosses the membrane as a helical span at residues 391-411 (GLLFLMLFSLLSAGALATTLC). Topologically, residues 412–450 (SLPRAWALFPPSDDYDDTDDDDPFNPQESKRFVQWQSSI) are cytoplasmic. Residues 428–450 (DTDDDDPFNPQESKRFVQWQSSI) are disordered. Residue serine 440 is modified to Phosphoserine.

This sequence belongs to the tweety family. Homotetramer; disulfide-linked. Homodimer. In terms of processing, N-glycosylated. Contains high-mannose, hybrid and complex oligosaccharides.

It localises to the cell membrane. The catalysed reaction is chloride(in) = chloride(out). The enzyme catalyses L-glutamate(out) = L-glutamate(in). In terms of biological role, calcium-independent, swelling-dependent volume-regulated anion channel (VRAC-swell) which plays a pivotal role in the process of regulatory volume decrease (RVD) in the brain through the efflux of anions like chloride and organic osmolytes like glutamate. The protein is Protein tweety homolog 1 (Ttyh1) of Rattus norvegicus (Rat).